The sequence spans 474 residues: Ribulose bisphosphate carboxylase large chain (474 aa).

Position 2 is an N-acetylproline (proline 2). The residue at position 13 (lysine 13) is an N6,N6,N6-trimethyllysine. Substrate contacts are provided by asparagine 122 and threonine 172. The active-site Proton acceptor is the lysine 174. A substrate-binding site is contributed by lysine 176. 3 residues coordinate Mg(2+): lysine 200, aspartate 202, and glutamate 203. Lysine 200 bears the N6-carboxylysine mark. The Proton acceptor role is filled by histidine 293. The substrate site is built by arginine 294, histidine 326, and serine 378.

It belongs to the RuBisCO large chain family. Type I subfamily. Heterohexadecamer of 8 large chains and 8 small chains; disulfide-linked. The disulfide link is formed within the large subunit homodimers. The cofactor is Mg(2+). In terms of processing, the disulfide bond which can form in the large chain dimeric partners within the hexadecamer appears to be associated with oxidative stress and protein turnover.

It localises to the plastid. The protein localises to the chloroplast. It catalyses the reaction 2 (2R)-3-phosphoglycerate + 2 H(+) = D-ribulose 1,5-bisphosphate + CO2 + H2O. It carries out the reaction D-ribulose 1,5-bisphosphate + O2 = 2-phosphoglycolate + (2R)-3-phosphoglycerate + 2 H(+). RuBisCO catalyzes two reactions: the carboxylation of D-ribulose 1,5-bisphosphate, the primary event in carbon dioxide fixation, as well as the oxidative fragmentation of the pentose substrate in the photorespiration process. Both reactions occur simultaneously and in competition at the same active site. The protein is Ribulose bisphosphate carboxylase large chain of Oltmannsiellopsis viridis (Marine flagellate).